Here is a 942-residue protein sequence, read N- to C-terminus: Cilia- and flagella-associated protein 69 (942 aa).

The span at 1-16 (MSTAEASATTADAAEA) shows a compositional bias: low complexity. Residues 1 to 25 (MSTAEASATTADAAEAGGRTKTGSP) are disordered.

In terms of tissue distribution, expressed in ciliated olfactory sensory neurons (at protein level). Expressed in testis, specifically in sperm (at protein level).

It is found in the cell projection. It localises to the cilium. Its subcellular location is the flagellum. Cilium- and flagellum-associated protein. In the olfactory epithelium, regulates the speed of activation and termination of the odor response and thus contributes to the robustness of olfactory transduction pathways. Required for sperm flagellum assembly and stability. The polypeptide is Cilia- and flagella-associated protein 69 (Mus musculus (Mouse)).